Consider the following 250-residue polypeptide: 2,3-bisphosphoglycerate-dependent phosphoglycerate mutase (250 aa).

Residues 8–15, 21–22, Arg60, 87–90, Lys98, 114–115, and 183–184 contribute to the substrate site; these read RHGESQWN, TG, ERHY, RR, and GN. His9 functions as the Tele-phosphohistidine intermediate in the catalytic mechanism. The active-site Proton donor/acceptor is the Glu87.

The protein belongs to the phosphoglycerate mutase family. BPG-dependent PGAM subfamily. Homodimer.

The enzyme catalyses (2R)-2-phosphoglycerate = (2R)-3-phosphoglycerate. The protein operates within carbohydrate degradation; glycolysis; pyruvate from D-glyceraldehyde 3-phosphate: step 3/5. Functionally, catalyzes the interconversion of 2-phosphoglycerate and 3-phosphoglycerate. This is 2,3-bisphosphoglycerate-dependent phosphoglycerate mutase from Bordetella avium (strain 197N).